Reading from the N-terminus, the 552-residue chain is Chaperonin GroEL (552 aa).

ATP-binding positions include T30–P33, K51, D87–T91, G415, N479–A481, and D495.

It belongs to the chaperonin (HSP60) family. Forms a cylinder of 14 subunits composed of two heptameric rings stacked back-to-back. Interacts with the co-chaperonin GroES.

The protein resides in the cytoplasm. The enzyme catalyses ATP + H2O + a folded polypeptide = ADP + phosphate + an unfolded polypeptide.. Its function is as follows. Together with its co-chaperonin GroES, plays an essential role in assisting protein folding. The GroEL-GroES system forms a nano-cage that allows encapsulation of the non-native substrate proteins and provides a physical environment optimized to promote and accelerate protein folding. In Nitrosospira multiformis (strain ATCC 25196 / NCIMB 11849 / C 71), this protein is Chaperonin GroEL.